The primary structure comprises 260 residues: Dehydrogenase/reductase SDR family member 11 (260 aa).

The first 30 residues, 1–30, serve as a signal peptide directing secretion; sequence MTRAGMERWRDRLALVTGASGGIGAAVARA. NADP(+)-binding positions include 18–23, 43–44, glutamate 49, 70–71, and asparagine 97; these read GASGGI, RT, and DL. Positions 151 and 166 each coordinate substrate. Residues tyrosine 166, lysine 170, 201–204, and lysine 208 contribute to the NADP(+) site; that span reads VETQ. The active-site Proton acceptor is tyrosine 166.

It belongs to the short-chain dehydrogenases/reductases (SDR) family. Homotetramer.

It localises to the secreted. It carries out the reaction a 3beta-hydroxysteroid + NADP(+) = a 3-oxosteroid + NADPH + H(+). The enzyme catalyses 17beta-estradiol + NAD(+) = estrone + NADH + H(+). It catalyses the reaction 17beta-estradiol + NADP(+) = estrone + NADPH + H(+). It functions in the pathway steroid biosynthesis; estrogen biosynthesis. Its activity is regulated as follows. Inhibited by flavonoids including apigenin, luteolin, genistein, kaempferol and quercetin and also by carbenoxolone, zearalenone, glycyrrhetinic, curcumin and flufenamic acid. Functionally, catalyzes the conversion of the 17-keto group of estrone, 4- and 5-androstenes and 5-alpha-androstanes into their 17-beta-hydroxyl metabolites and the conversion of the 3-keto group of 3-, 3,17- and 3,20- diketosteroids into their 3-hydroxyl metabolites. Exhibits reductive 3-beta-hydroxysteroid dehydrogenase activity toward 5-beta-androstanes, 5-beta-pregnanes, 4-pregnenes and bile acids. May also reduce endogenous and exogenous alpha-dicarbonyl compounds and xenobiotic alicyclic ketones. This chain is Dehydrogenase/reductase SDR family member 11 (Dhrs11), found in Mus musculus (Mouse).